The following is a 193-amino-acid chain: Large ribosomal subunit protein bL12cy (193 aa).

The transit peptide at 1 to 59 directs the protein to the chloroplast; the sequence is MAATTLSIATTIRSSSFSSGLASAHHFPSRPLSIEFPFSFGVSSSSTLSHRAIYLHPIS. The segment covering 170-187 has biased composition (basic and acidic residues); sequence GVTKDEAEEDKTQLEEAG. Residues 170-193 form a disordered region; the sequence is GVTKDEAEEDKTQLEEAGAKVSIV.

The protein belongs to the bacterial ribosomal protein bL12 family.

It is found in the plastid. It localises to the chloroplast. This Arabidopsis thaliana (Mouse-ear cress) protein is Large ribosomal subunit protein bL12cy (RPL12B).